We begin with the raw amino-acid sequence, 583 residues long: Inactive carboxylesterase-like protein VdtD (583 aa).

The signal sequence occupies residues 1–23; sequence MFMTQIVFGIAPTLLKTFSHLTA. Asn84, Asn109, Asn221, Asn265, Asn307, Asn350, Asn388, Asn448, and Asn468 each carry an N-linked (GlcNAc...) asparagine glycan.

The protein belongs to the type-B carboxylesterase/lipase family.

Its pathway is secondary metabolite biosynthesis. In terms of biological role, inactive carboxylesterase-like protein; part of the gene cluster that mediates the biosynthesis of viriditoxin, one of the 'classical' secondary metabolites produced by fungi and that has antibacterial activity. The first step is performed by the polyketide synthase VdtA which condenses one acetyl-CoA and 6 malonyl-CoA units to form the heptaketide monomer backbone of viriditoxin. The product of VdtA is then O-methylated on C7 by the O-methyltransferase VdtC. The O-methyl group is important for the stereoselective coupling of the monomers at the final step of viriditoxin biosynthesis. The short-chain dehydrogenase/reductase VdtF then acts as a stereospecific reductase converting the pyrone to dihydropyrone via the reduction of the C3-C4 double bond. The FAD-binding monooxygenase VdtE then converts the ketone group into a methyl-ester group to yield semi-viriditoxin. Finally, the laccase VdtB is involved in dimerization of 2 semi-viriditoxin molecules to yield the final viriditoxin. VdtB is responsible for the regioselective 6,6'-coupling of semi-viriditoxin, which yields (M)-viriditoxin and (P)-viriditoxin at a ratio of 1:2. The non-catalytic carboxylesterase-like protein VdtD affects the stereochemistical outcome of the coupling. The highly reducing polyketide synthase VdtX is not involved in viriditoxin synthesis, but might possibly play a role in the production of additional metabolites not identified yet. The chain is Inactive carboxylesterase-like protein VdtD from Byssochlamys spectabilis (Paecilomyces variotii).